Reading from the N-terminus, the 400-residue chain is Enoyl-[acyl-carrier-protein] reductase [NADH] (400 aa).

Residues 48–53 (GASTGY), 74–75 (FE), 111–112 (DA), and 139–140 (LA) contribute to the NAD(+) site. Residue Tyr-225 coordinates substrate. Tyr-235 acts as the Proton donor in catalysis. Residues Lys-244 and 273 to 275 (VVT) each bind NAD(+).

It belongs to the TER reductase family. As to quaternary structure, monomer.

The catalysed reaction is a 2,3-saturated acyl-[ACP] + NAD(+) = a (2E)-enoyl-[ACP] + NADH + H(+). It participates in lipid metabolism; fatty acid biosynthesis. In terms of biological role, involved in the final reduction of the elongation cycle of fatty acid synthesis (FAS II). Catalyzes the reduction of a carbon-carbon double bond in an enoyl moiety that is covalently linked to an acyl carrier protein (ACP). The sequence is that of Enoyl-[acyl-carrier-protein] reductase [NADH] from Burkholderia lata (strain ATCC 17760 / DSM 23089 / LMG 22485 / NCIMB 9086 / R18194 / 383).